The primary structure comprises 852 residues: Lon protease homolog 2, peroxisomal (852 aa).

Serine 2 carries the N-acetylserine modification. Positions 13–222 constitute a Lon N-terminal domain; sequence LPLLLTHESV…MTIPLLVRQI (210 aa). 375–382 lines the ATP pocket; sequence GPPGVGKT. In terms of domain architecture, Lon proteolytic spans 651–837; the sequence is LSQPGVAIGL…DEVLNAAFDG (187 aa). Catalysis depends on residues serine 743 and lysine 786. A Microbody targeting signal motif is present at residues 850-852; the sequence is SKL.

It belongs to the peptidase S16 family. In terms of assembly, interacts with PEX5. Interacts with TYSND1. May interact with enzymes involved in beta-oxidation of fatty acids, including ACOX1/AOX.

Its subcellular location is the peroxisome matrix. It carries out the reaction Hydrolysis of proteins in presence of ATP.. In terms of biological role, ATP-dependent serine protease that mediates the selective degradation of misfolded and unassembled polypeptides in the peroxisomal matrix. Necessary for type 2 peroxisome targeting signal (PTS2)-containing protein processing and facilitates peroxisome matrix protein import. May indirectly regulate peroxisomal fatty acid beta-oxidation through degradation of the self-processed forms of TYSND1. The protein is Lon protease homolog 2, peroxisomal (Lonp2) of Rattus norvegicus (Rat).